The following is an 89-amino-acid chain: Large ribosomal subunit protein bL27 (89 aa).

A disordered region spans residues Met1–Ile23.

Belongs to the bacterial ribosomal protein bL27 family.

The chain is Large ribosomal subunit protein bL27 from Rhodopseudomonas palustris (strain BisA53).